We begin with the raw amino-acid sequence, 403 residues long: Argininosuccinate synthase (403 aa).

ATP contacts are provided by residues 10-18 (AYSGGLDTS) and A37. Y88 and S93 together coordinate L-citrulline. Residue G118 participates in ATP binding. L-aspartate is bound by residues T120, N124, and D125. N124 provides a ligand contact to L-citrulline. Residues R128, S178, S187, E263, and Y275 each contribute to the L-citrulline site.

It belongs to the argininosuccinate synthase family. Type 1 subfamily. Homotetramer.

Its subcellular location is the cytoplasm. The enzyme catalyses L-citrulline + L-aspartate + ATP = 2-(N(omega)-L-arginino)succinate + AMP + diphosphate + H(+). The protein operates within amino-acid biosynthesis; L-arginine biosynthesis; L-arginine from L-ornithine and carbamoyl phosphate: step 2/3. This is Argininosuccinate synthase from Marinobacter nauticus (strain ATCC 700491 / DSM 11845 / VT8) (Marinobacter aquaeolei).